The primary structure comprises 254 residues: Galactitol 2-dehydrogenase (L-tagatose-forming) (254 aa).

Residues 21-23 (SGI), aspartate 42, 66-67 (DV), tyrosine 159, lysine 163, and 192-194 (VAT) contribute to the NAD(+) site. The active-site Proton acceptor is tyrosine 159. Tryptophan 254 is a Mg(2+) binding site.

This sequence belongs to the short-chain dehydrogenases/reductases (SDR) family. As to quaternary structure, homotetramer. Requires a divalent metal cation as cofactor.

It catalyses the reaction galactitol + NAD(+) = keto-L-tagatose + NADH + H(+). Inhibited by the chelating agents EDTA and alpha,alpha'-dipyridyl. Inhibited by Zn(2+) and Fe(2+). Functionally, catalyzes the interconversion of galactitol to the rare sugar L-tagatose. Shows activity with a wide range of substrates, and catalyzes the oxidation of a variety of polyvalent aliphatic alcohols and polyols to the corresponding ketones and ketoses, respectively, and in the reverse reaction, it reduces ketones with high stereoselectivity yielding the corresponding S-configurated alcohols. Shows high activity with D-threitol, xylitol, 1,2-hexanediol, 1,2-pentanediol, 2-hexanol, L-erythrulose, D-ribulose and acetoin. Specific for NAD(+). The protein is Galactitol 2-dehydrogenase (L-tagatose-forming) of Cereibacter sphaeroides (Rhodobacter sphaeroides).